The following is a 103-amino-acid chain: Large ribosomal subunit protein bL25 (103 aa).

This sequence belongs to the bacterial ribosomal protein bL25 family. As to quaternary structure, part of the 50S ribosomal subunit; part of the 5S rRNA/L5/L18/L25 subcomplex. Contacts the 5S rRNA. Binds to the 5S rRNA independently of L5 and L18.

Functionally, this is one of the proteins that binds to the 5S RNA in the ribosome where it forms part of the central protuberance. The sequence is that of Large ribosomal subunit protein bL25 from Blochmanniella floridana.